The primary structure comprises 436 residues: ATP-dependent protease ATPase subunit HslU (436 aa).

ATP-binding positions include Val-18, 60-65 (GVGKTE), Asp-249, Glu-314, and Arg-386.

The protein belongs to the ClpX chaperone family. HslU subfamily. A double ring-shaped homohexamer of HslV is capped on each side by a ring-shaped HslU homohexamer. The assembly of the HslU/HslV complex is dependent on binding of ATP.

It localises to the cytoplasm. In terms of biological role, ATPase subunit of a proteasome-like degradation complex; this subunit has chaperone activity. The binding of ATP and its subsequent hydrolysis by HslU are essential for unfolding of protein substrates subsequently hydrolyzed by HslV. HslU recognizes the N-terminal part of its protein substrates and unfolds these before they are guided to HslV for hydrolysis. This chain is ATP-dependent protease ATPase subunit HslU, found in Rhizobium rhizogenes (strain K84 / ATCC BAA-868) (Agrobacterium radiobacter).